A 206-amino-acid chain; its full sequence is Large ribosomal subunit protein uL13x (206 aa).

It belongs to the universal ribosomal protein uL13 family.

The sequence is that of Large ribosomal subunit protein uL13x (RPL13AC) from Arabidopsis thaliana (Mouse-ear cress).